The primary structure comprises 315 residues: KH domain-containing protein At5g56140 (315 aa).

Disordered stretches follow at residues 1–53 and 136–158; these read MMMM…GGLR and SQFP…SPGS. Residues 7-28 show a composition bias toward gly residues; it reads LGGGGGGGGGSGGGIGGGGGGR. Polar residues-rich tracts occupy residues 31–53 and 136–146; these read TYSS…GGLR and SQFPSERSVPS. Residues 171–238 form the KH domain; that stretch reads DIPVDNYPNF…EHLNEPLHIL (68 aa). Positions 289 to 315 are disordered; the sequence is REEGSPMSGSVSPYNSLGMKRAKTREG. Ser-300 is modified (phosphoserine).

The protein localises to the nucleus. This Arabidopsis thaliana (Mouse-ear cress) protein is KH domain-containing protein At5g56140.